The following is a 365-amino-acid chain: Mitogen-activated protein kinase p38b (365 aa).

Residues 24–311 (YQNLQPVGQG…AEQALAHPYM (288 aa)) form the Protein kinase domain. Residues 30–38 (VGQGAYGQV) and lysine 53 contribute to the ATP site. Residue aspartate 153 is the Proton acceptor of the active site. Position 183 is a phosphothreonine (threonine 183). Residues 183–185 (TGY) carry the TXY motif. At tyrosine 185 the chain carries Phosphotyrosine.

Belongs to the protein kinase superfamily. CMGC Ser/Thr protein kinase family. MAP kinase subfamily. Requires Mg(2+) as cofactor. Post-translationally, dually phosphorylated on Thr-183 and Tyr-185, which activates the enzyme. In terms of tissue distribution, at mid-embryogenesis, highest expression is seen in developing anterior and posterior midguts. Almost ubiquitous expression throughout all development.

It localises to the nucleus. The catalysed reaction is L-seryl-[protein] + ATP = O-phospho-L-seryl-[protein] + ADP + H(+). It catalyses the reaction L-threonyl-[protein] + ATP = O-phospho-L-threonyl-[protein] + ADP + H(+). Its activity is regulated as follows. Activated by threonine and tyrosine phosphorylation by Mkk3. Its function is as follows. Kinase involved in dpp signal transduction pathway in the process of wing morphogenesis when the levels of dpp are enhanced or inhibited. May down-regulate insect immunity gene expression after prolonged infection. This chain is Mitogen-activated protein kinase p38b, found in Drosophila melanogaster (Fruit fly).